The sequence spans 449 residues: Glycoprotein endo-alpha-1,2-mannosidase (449 aa).

The Cytoplasmic portion of the chain corresponds to 1–8 (MIRFRRRT). Residues 9–29 (CITLSIFIFLVCLIMAGLKHL) form a helical; Signal-anchor for type II membrane protein membrane-spanning segment. Topologically, residues 30–449 (RPENAAFGSP…YMKEKEHWLV (420 aa)) are lumenal. The tract at residues 59 to 449 (DSENHLKGNT…YMKEKEHWLV (391 aa)) is catalytic.

This sequence belongs to the glycosyl hydrolase 99 family.

The protein resides in the golgi apparatus membrane. It catalyses the reaction N-{alpha-Glc-(1-&gt;3)-alpha-Man-(1-&gt;2)-alpha-Man-(1-&gt;2)-alpha-Man-(1-&gt;3)-[alpha-Man-(1-&gt;2)-alpha-Man-(1-&gt;3)-[alpha-Man-(1-&gt;2)-alpha-Man-(1-&gt;6)]-alpha-Man-(1-&gt;6)]-beta-Man-(1-&gt;4)-beta-GlcNAc-(1-&gt;4)-beta-GlcNAc}-L-asparaginyl-[protein] + H2O = alpha-D-glucosyl-(1-&gt;3)-D-mannopyranose + N(4)-{alpha-D-Man-(1-&gt;2)-alpha-D-Man-(1-&gt;3)-[alpha-D-Man-(1-&gt;2)-alpha-D-Man-(1-&gt;3)-[alpha-D-Man-(1-&gt;2)-alpha-D-Man-(1-&gt;6)]-alpha-D-Man-(1-&gt;6)]-beta-D-Man-(1-&gt;4)-beta-D-GlaNAc-(1-&gt;4)-beta-D-GlcNAc}-L-asparaginyl-[protein] (N-glucan mannose isomer 8A1,2,3B1,2). The protein is Glycoprotein endo-alpha-1,2-mannosidase (manea) of Xenopus laevis (African clawed frog).